We begin with the raw amino-acid sequence, 361 residues long: Phospho-N-acetylmuramoyl-pentapeptide-transferase (361 aa).

The next 10 helical transmembrane spans lie at 25–45, 73–93, 98–118, 139–159, 168–188, 200–220, 237–257, 264–284, 289–309, and 339–359; these read RGIL…PAVI, TMGG…WGDL, VWLV…DDWI, IFGL…AAIT, IALP…IVGF, GLAI…AYAS, AGEL…FLWF, VFMG…IAVI, MVLV…IIQV, and VIVR…ATLK.

Belongs to the glycosyltransferase 4 family. MraY subfamily. It depends on Mg(2+) as a cofactor.

The protein localises to the cell inner membrane. It catalyses the reaction UDP-N-acetyl-alpha-D-muramoyl-L-alanyl-gamma-D-glutamyl-meso-2,6-diaminopimeloyl-D-alanyl-D-alanine + di-trans,octa-cis-undecaprenyl phosphate = di-trans,octa-cis-undecaprenyl diphospho-N-acetyl-alpha-D-muramoyl-L-alanyl-D-glutamyl-meso-2,6-diaminopimeloyl-D-alanyl-D-alanine + UMP. Its pathway is cell wall biogenesis; peptidoglycan biosynthesis. Its function is as follows. Catalyzes the initial step of the lipid cycle reactions in the biosynthesis of the cell wall peptidoglycan: transfers peptidoglycan precursor phospho-MurNAc-pentapeptide from UDP-MurNAc-pentapeptide onto the lipid carrier undecaprenyl phosphate, yielding undecaprenyl-pyrophosphoryl-MurNAc-pentapeptide, known as lipid I. In Xanthomonas oryzae pv. oryzae (strain PXO99A), this protein is Phospho-N-acetylmuramoyl-pentapeptide-transferase.